The chain runs to 25 residues: Xenoposin precursor fragment BM3 (25 aa).

Expressed by the skin glands.

The protein resides in the secreted. In terms of biological role, antimicrobial peptide. The sequence is that of Xenoposin precursor fragment BM3 from Xenopus boumbaensis (Mawa clawed frog).